A 503-amino-acid polypeptide reads, in one-letter code: Lysine--tRNA ligase (503 aa).

Glutamate 413 and glutamate 420 together coordinate Mg(2+).

Belongs to the class-II aminoacyl-tRNA synthetase family. Homodimer. Mg(2+) serves as cofactor.

The protein localises to the cytoplasm. It catalyses the reaction tRNA(Lys) + L-lysine + ATP = L-lysyl-tRNA(Lys) + AMP + diphosphate. The chain is Lysine--tRNA ligase from Actinobacillus succinogenes (strain ATCC 55618 / DSM 22257 / CCUG 43843 / 130Z).